The following is a 405-amino-acid chain: Acetylornithine aminotransferase 2 (405 aa).

Pyridoxal 5'-phosphate is bound by residues glycine 105–threonine 106 and phenylalanine 138. Arginine 141 provides a ligand contact to N(2)-acetyl-L-ornithine. Pyridoxal 5'-phosphate is bound at residue aspartate 224–glutamine 227. N6-(pyridoxal phosphate)lysine is present on lysine 254. Position 282 (serine 282) interacts with N(2)-acetyl-L-ornithine. Threonine 283 is a pyridoxal 5'-phosphate binding site.

This sequence belongs to the class-III pyridoxal-phosphate-dependent aminotransferase family. ArgD subfamily. In terms of assembly, homodimer. It depends on pyridoxal 5'-phosphate as a cofactor.

The protein resides in the cytoplasm. It carries out the reaction N(2)-acetyl-L-ornithine + 2-oxoglutarate = N-acetyl-L-glutamate 5-semialdehyde + L-glutamate. It functions in the pathway amino-acid biosynthesis; L-arginine biosynthesis; N(2)-acetyl-L-ornithine from L-glutamate: step 4/4. The polypeptide is Acetylornithine aminotransferase 2 (Caulobacter vibrioides (strain ATCC 19089 / CIP 103742 / CB 15) (Caulobacter crescentus)).